Reading from the N-terminus, the 912-residue chain is MLGGLAKAIFGSSNDRYVKSLRPILQKIAGFEPTLEAMNDEELAAQTVKFRQRLDAGETLDSLLPEAFATVREAARRVLGQRHYDVQMIGGIVLHRGEIAEMRTGEGKTLVATLAVYLNALPGEGVHVVTVNDYLATRDAEWMGRVYRFLGLTVGVIVPNLSDQERRDAYGADITYGTNNEFGFDYLRDNMKYDRALMVHRPFNFAVVDEVDSVLIDEARTPLIISGPTDDKSELYMQVDAIVKQVTKDDYEFDEKQRSVVLTEDGTERIERLLEAAGLLEGGNLYAYENTQVVHHLNQALRANVAFKRDTDYIVKDEKIIIIDEFTGRMMDGRRWSDGLHQAVEAKEGVKIEPENQTLASITFQNYFRMYPKLGGMTGTAATEAHEFYQIYKMNVVTIPTNLPVKRIDQDDEFYKNMLDKFAAITQAIREAKERGQPVLVGTVSIEKSELLSEFLTKEKVEHKVLNARYHEQEAHIVAQAGRLGAVTIATNMAGRGTDIQLGGNLEFRMLDEHPALEIGTPEFDAAAERIRGEIIAEKEAVLAAGGLFVLGTERHESRRIDNQLRGRSGRQGDPGLSRFYLSLDDDLLRIFGPQTMFARMMNKNLADGEAIVSPWISKAIETAQKKVEARNYDIRKQVVEYDDVMNDQRKVIYEQRADIMDAETVDDVVTDMRADTANAIVGGCCPPHSYPEQWDVDTLKLRSAETLGITPPFDEWIEQDGIDPEILAEKVLAEADAVIAAKRATIDDQSWHGIEKSVLLQTLDHHWKEHLATLDALRQVIHLRAYAQKTPINEYKHEAFALFERMLVAIREEVTRVLAHVRFEMAPQDYAELPPMPDFVTEHVNALTGEDNSGDRDGGTLGIIGSRVPQAIAAPAGDDFEITPEIAATLGRNSLCPCGSGRKYKHCHGAL.

Residues Gln87, 105–109 (GEGKT), and Asp499 each bind ATP. Zn(2+) contacts are provided by Cys897, Cys899, Cys908, and His909.

It belongs to the SecA family. Monomer and homodimer. Part of the essential Sec protein translocation apparatus which comprises SecA, SecYEG and auxiliary proteins SecDF-YajC and YidC. It depends on Zn(2+) as a cofactor.

The protein resides in the cell inner membrane. Its subcellular location is the cytoplasm. It carries out the reaction ATP + H2O + cellular proteinSide 1 = ADP + phosphate + cellular proteinSide 2.. Functionally, part of the Sec protein translocase complex. Interacts with the SecYEG preprotein conducting channel. Has a central role in coupling the hydrolysis of ATP to the transfer of proteins into and across the cell membrane, serving both as a receptor for the preprotein-SecB complex and as an ATP-driven molecular motor driving the stepwise translocation of polypeptide chains across the membrane. The chain is Protein translocase subunit SecA from Rhizorhabdus wittichii (strain DSM 6014 / CCUG 31198 / JCM 15750 / NBRC 105917 / EY 4224 / RW1) (Sphingomonas wittichii).